Consider the following 105-residue polypeptide: Large ribosomal subunit protein uL24 (105 aa).

Belongs to the universal ribosomal protein uL24 family. In terms of assembly, part of the 50S ribosomal subunit.

In terms of biological role, one of two assembly initiator proteins, it binds directly to the 5'-end of the 23S rRNA, where it nucleates assembly of the 50S subunit. Its function is as follows. One of the proteins that surrounds the polypeptide exit tunnel on the outside of the subunit. The chain is Large ribosomal subunit protein uL24 from Aliivibrio salmonicida (strain LFI1238) (Vibrio salmonicida (strain LFI1238)).